Consider the following 207-residue polypeptide: Proteasome subunit beta 1 (207 aa).

Positions 1 to 9 (MWALDKIKG) are cleaved as a propeptide — removed in mature form; by autocatalysis. Thr10 functions as the Nucleophile in the catalytic mechanism.

The protein belongs to the peptidase T1B family. In terms of assembly, the 20S proteasome core is composed of 14 alpha and 14 beta subunits that assemble into four stacked heptameric rings, resulting in a barrel-shaped structure. The two inner rings, each composed of seven catalytic beta subunits, are sandwiched by two outer rings, each composed of seven alpha subunits. The catalytic chamber with the active sites is on the inside of the barrel. Has a gated structure, the ends of the cylinder being occluded by the N-termini of the alpha-subunits. Is capped at one or both ends by the proteasome regulatory ATPase, PAN.

The protein resides in the cytoplasm. It catalyses the reaction Cleavage of peptide bonds with very broad specificity.. With respect to regulation, the formation of the proteasomal ATPase PAN-20S proteasome complex, via the docking of the C-termini of PAN into the intersubunit pockets in the alpha-rings, triggers opening of the gate for substrate entry. Interconversion between the open-gate and close-gate conformations leads to a dynamic regulation of the 20S proteasome proteolysis activity. In terms of biological role, component of the proteasome core, a large protease complex with broad specificity involved in protein degradation. The polypeptide is Proteasome subunit beta 1 (Thermococcus sibiricus (strain DSM 12597 / MM 739)).